A 144-amino-acid polypeptide reads, in one-letter code: uncharacterized protein (144 aa).

Residues 25 to 47 form a helical membrane-spanning segment; the sequence is LTLLDGCCVALVLALTAWSGFFV.

It is found in the membrane. This is an uncharacterized protein from Treponema pallidum (strain Nichols).